Here is a 726-residue protein sequence, read N- to C-terminus: MAAAKWLIASLAFASSGLAFTPEDFISAPRRGEAIPDPKGELAVFHVSKYNFDKKDRPSGWNLLNLKNGDISVLTTDSDVSEITWLGDGTKVVYVNGTDSVKGGVGIWISDAKNFGNAYKAGSVNGAFSGLKLAKSGDKINFVGYGQSTTKGDLYNEAAAKEAVSSARIYDSLFVRHWDTYVSTQFNAVFSGALTKNGDKYSFDGKLKNLVQPVKYAESPYPPFGGSGDYDLSSDGKTVAFMSKAPELPKANLTTSYIFLVPHDGSRVAEPINKRNGPRTPQGIEGASSSPVFSPDGKRIAYLQMATKNYESDRRVIHIAEVGSNKPVQRIASNWDRSPEAVKWSSDGRTLYVTAEDHATGKLFTLPADARDNHKPEVVKHDGSVSSFYFVGSSKSVLISGNSLWSNALYQVATPGRPNRKLFYANEHDPELKGLGPNDIEPLWVDGARTKIHSWIVKPTGFDKNKVYPLAFLIHGGPQGSWGDNWSTRWNPRVWADQGYVVVAPNPTGSTGFGQKLTDDITNDWGGAPYKDLVKIWEHVHNNIKYIDTDNGIAAGASFGGFMVNWIQGQDLGRKFKALVSHDGTFVGSSKIGTDELFFIEHDFNGTFFEARQNYDRWDCSKPELVAKWSTPQLVVHNDFDFRLSVAEGVGLFNVLQEKGVPSRFLNFPDETHWVTKPENSLVWHQQVLGWVNKWSGINKSNPKSIKLSDCPIEVVDHEAHSYFDY.

Residues 1–19 (MAAAKWLIASLAFASSGLA) form the signal peptide. Asn-96 and Asn-252 each carry an N-linked (GlcNAc...) asparagine glycan. Residues 269 to 291 (AEPINKRNGPRTPQGIEGASSSP) form a disordered region. A glycan (N-linked (GlcNAc...) asparagine) is linked at Asn-485. Ser-558 functions as the Charge relay system in the catalytic mechanism. Asn-605 is a glycosylation site (N-linked (GlcNAc...) asparagine). Residues Asp-641 and His-673 each act as charge relay system in the active site. Asn-699 is a glycosylation site (N-linked (GlcNAc...) asparagine).

This sequence belongs to the peptidase S9C family.

It localises to the secreted. In terms of biological role, extracellular dipeptidyl-peptidase which removes N-terminal dipeptides sequentially from polypeptides having unsubstituted N-termini. Contributes to pathogenicity. The polypeptide is Probable dipeptidyl-peptidase 5 (DPP5) (Arthroderma benhamiae (strain ATCC MYA-4681 / CBS 112371) (Trichophyton mentagrophytes)).